The chain runs to 1400 residues: RNA polymerase II-associated protein 1 (1400 aa).

Disordered regions lie at residues 35–54, 60–95, 161–215, and 269–310; these read KGSR…QDHR, DSLP…EERL, VSDN…GKGL, and REQT…DKLE. Basic and acidic residues-rich tracts occupy residues 39-54 and 85-95; these read RRGD…QDHR and LPHDEDPEERL. Positions 269 to 282 are enriched in basic and acidic residues; it reads REQTETKATKEQNP. Thr329 carries the phosphothreonine modification. The segment at 504-539 is disordered; that stretch reads PSHDDKEDEDEDEELTKEKVNRKTPEEGSRPPPDLA. The segment covering 509-518 has biased composition (acidic residues); that stretch reads KEDEDEDEEL. Over residues 519–539 the composition is skewed to basic and acidic residues; it reads TKEKVNRKTPEEGSRPPPDLA.

The protein belongs to the RPAP1 family. Part of an RNA polymerase II complex that contains POLR2A, POLR2B, POLR2C, POLR2D, POLR2E, POLR2F, POLR2G, POLR2H, POLR2I, POLR2J, POLR2K, POLR2L, RPAP1, FCP1 plus the general transcription factors TFIIB and TFIIF.

Its subcellular location is the nucleus. In terms of biological role, forms an interface between the RNA polymerase II enzyme and chaperone/scaffolding protein, suggesting that it is required to connect RNA polymerase II to regulators of protein complex formation. Required for interaction of the RNA polymerase II complex with acetylated histone H3. In Rattus norvegicus (Rat), this protein is RNA polymerase II-associated protein 1 (Rpap1).